The sequence spans 85 residues: N.vectensis toxin 6 (85 aa).

A signal peptide spans 1 to 20; sequence MISFKTVIVCLFLWVVIIGA. 3 disulfides stabilise this stretch: cysteine 46–cysteine 82, cysteine 48–cysteine 71, and cysteine 64–cysteine 83.

Probable toxin. This Nematostella vectensis (Starlet sea anemone) protein is N.vectensis toxin 6.